Reading from the N-terminus, the 370-residue chain is Glycerophosphodiester phosphodiesterase GDPD3 (370 aa).

Residues 35-322 form the GP-PDE domain; it reads FVLMGHRGFG…DMVKDISEAI (288 aa).

Belongs to the glycerophosphoryl diester phosphodiesterase family. In terms of tissue distribution, expressed in flowers and siliques.

The catalysed reaction is a sn-glycero-3-phosphodiester + H2O = an alcohol + sn-glycerol 3-phosphate + H(+). This Arabidopsis thaliana (Mouse-ear cress) protein is Glycerophosphodiester phosphodiesterase GDPD3.